Here is a 481-residue protein sequence, read N- to C-terminus: Tryptophan 5-hydroxylase (481 aa).

Residues 56 to 131 enclose the ACT domain; the sequence is SVIFSLKNEI…NVISMSPPEN (76 aa). L-tryptophan is bound by residues Tyr272, Arg294, and Thr302. Residues His309, His314, and Glu354 each coordinate Fe cation. L-tryptophan is bound by residues Ser373 and Ile403.

Belongs to the biopterin-dependent aromatic amino acid hydroxylase family. In terms of assembly, homotetramer. Fe(2+) serves as cofactor.

The catalysed reaction is (6R)-L-erythro-5,6,7,8-tetrahydrobiopterin + L-tryptophan + O2 = 5-hydroxy-L-tryptophan + (4aS,6R)-4a-hydroxy-L-erythro-5,6,7,8-tetrahydrobiopterin. It functions in the pathway aromatic compound metabolism; serotonin biosynthesis; serotonin from L-tryptophan: step 1/2. Oxidizes L-tryptophan to 5-hydroxy-l-tryptophan in the rate-determining step of serotonin biosynthesis. This Xenopus laevis (African clawed frog) protein is Tryptophan 5-hydroxylase (tph1).